Reading from the N-terminus, the 76-residue chain is uncharacterized protein (76 aa).

Residues M1 to D28 are disordered. The span at L16–K26 shows a compositional bias: polar residues.

It localises to the cytoplasm. The protein localises to the bud. It is found in the bud neck. This is an uncharacterized protein from Saccharomyces cerevisiae (strain ATCC 204508 / S288c) (Baker's yeast).